Here is a 50-residue protein sequence, read N- to C-terminus: Protein PndA (50 aa).

The helical transmembrane segment at 5–25 (TFLMMLIVVCVTILCFVWMVR) threads the bilayer.

This sequence belongs to the Hok/Gef family.

Its subcellular location is the cell inner membrane. Functionally, when overexpressed kill the cells from the inside by interfering with a vital function in the cell membrane. In terms of biological role, toxic component of a type I toxin-antitoxin (TA) system. When expressed is involved in cellular Mg(2+) release and degradation of stable RNA. This is Protein PndA (pndA) from Escherichia coli.